Consider the following 34-residue polypeptide: NU-buthitoxin-Ptr1a (34 aa).

Intrachain disulfides connect Cys-6/Cys-27, Cys-12/Cys-32, and Cys-16/Cys-34.

As to expression, expressed by the venom gland.

It localises to the secreted. Its function is as follows. Toxin that acts as an agonist on melanocortin receptors (MC1R, MC3R, MC5R, MC5R). After binding to MC1R, the peptide activates the hMC1R/Gs pathway, but after binding to MC4R, it is not able to activate or antagonize the MC4R/Gs pathway. Inhibits melanocyte stimulating hormone (MSH)-binding to human receptors (Ki=2.9 uM to MC1R, Ki=3.9 uM to MC3R, Ki=2.6 uM to MC4R, Ki=2.2 uM to MC5R). This toxin is structurally unrelated to the natural agonists. This Parabuthus transvaalicus (Transvaal thick-tailed scorpion) protein is NU-buthitoxin-Ptr1a.